A 727-amino-acid polypeptide reads, in one-letter code: Iron-sulfur clusters transporter ATM1, mitochondrial (727 aa).

The transit peptide at 1–25 (MLIGGAQNRLYQLRTSNILGLLRTR) directs the protein to the mitochondrion. Residues 26 to 138 (SALRVGSKVE…PRGNTKVKVR (113 aa)) are Mitochondrial matrix-facing. Residues 87–107 (KSKLPNEDTAHNASEKNSKKT) are disordered. Over residues 90-107 (LPNEDTAHNASEKNSKKT) the composition is skewed to basic and acidic residues. The helical transmembrane segment at 139-160 (VLLALALLIGAKVLNVQVPFFF) threads the bilayer. The ABC transmembrane type-1 domain occupies 139-429 (VLLALALLIG…LGSVYRELKQ (291 aa)). Topologically, residues 161–183 (KQIIDGMNVDWSDATVALPAALG) are mitochondrial intermembrane. Residues 184–207 (LTIMCYGLARFGAVLFGELRNAIF) traverse the membrane as a helical segment. Residues 208–256 (ARVAQNAIRNVSLQTFEHLMKLDLGWHLSRQTGGLTRAMDRGTKGISYV) lie on the Mitochondrial matrix side of the membrane. The chain crosses the membrane as a helical span at residues 257–280 (LSAMVFHIIPITFEISVVCGILTY). Position 281 (Gln281) is a topological domain, mitochondrial intermembrane. A helical transmembrane segment spans residues 282–302 (FGASFAGITFTTMLLYSIFTI). The Mitochondrial matrix portion of the chain corresponds to 303–368 (RTTAWRTRFR…SQVKVAQSLA (66 aa)). Glutathione is bound by residues 308 to 312 (RTRFR) and 371 to 374 (NSGQ). Residues 369-387 (FLNSGQSLIFTTALTGMMY) form a helical membrane-spanning segment. Residues 388–402 (MGCTGVIGGDLTVGD) lie on the Mitochondrial intermembrane side of the membrane. Residues 403–424 (LVLINQLVFQLSVPLNFLGSVY) form a helical membrane-spanning segment. Glutathione is bound at residue Gly421. Residues 425 to 727 (RELKQSLIDM…ETLEKLNKSI (303 aa)) are Mitochondrial matrix-facing. The ABC transporter domain occupies 465–701 (IKFENVTFGY…ENSLYKELWR (237 aa)). Residues Tyr474 and 498–509 (GPSGSGKSTVLK) contribute to the ATP site.

This sequence belongs to the ABC transporter superfamily. ABCB family. Heavy Metal importer (TC 3.A.1.210) subfamily. As to quaternary structure, homodimer.

It is found in the mitochondrion inner membrane. Its function is as follows. Performs an essential function in the generation of cytoplasmic iron-sulfur proteins by mediating the ATP-dependent export of Fe/S cluster precursors synthesized by NFS1 and other mitochondrial proteins. Hydrolyzes ATP. Binds glutathione and may function by transporting a glutathione-conjugated iron-sulfur compound. The sequence is that of Iron-sulfur clusters transporter ATM1, mitochondrial from Candida glabrata (strain ATCC 2001 / BCRC 20586 / JCM 3761 / NBRC 0622 / NRRL Y-65 / CBS 138) (Yeast).